The following is a 542-amino-acid chain: CTP synthase (542 aa).

An amidoligase domain region spans residues 1–265; that stretch reads MTKFVFVTGG…DEIVCHKLNL (265 aa). CTP is bound at residue Ser13. UTP is bound at residue Ser13. ATP is bound by residues 14 to 19 and Asp71; that span reads SLGKGI. Mg(2+)-binding residues include Asp71 and Glu139. CTP contacts are provided by residues 146–148, 186–191, and Lys222; these read DIE and KTKPTQ. UTP is bound by residues 186–191 and Lys222; that span reads KTKPTQ. A Glutamine amidotransferase type-1 domain is found at 290–542; it reads NVAFVGKYVD…IAAALANRKA (253 aa). Position 351 (Gly351) interacts with L-glutamine. Cys378 acts as the Nucleophile; for glutamine hydrolysis in catalysis. L-glutamine is bound by residues 379 to 382, Glu402, and Arg468; that span reads LGMQ. Active-site residues include His515 and Glu517.

The protein belongs to the CTP synthase family. In terms of assembly, homotetramer.

It carries out the reaction UTP + L-glutamine + ATP + H2O = CTP + L-glutamate + ADP + phosphate + 2 H(+). The catalysed reaction is L-glutamine + H2O = L-glutamate + NH4(+). The enzyme catalyses UTP + NH4(+) + ATP = CTP + ADP + phosphate + 2 H(+). Its pathway is pyrimidine metabolism; CTP biosynthesis via de novo pathway; CTP from UDP: step 2/2. Its activity is regulated as follows. Allosterically activated by GTP, when glutamine is the substrate; GTP has no effect on the reaction when ammonia is the substrate. The allosteric effector GTP functions by stabilizing the protein conformation that binds the tetrahedral intermediate(s) formed during glutamine hydrolysis. Inhibited by the product CTP, via allosteric rather than competitive inhibition. Catalyzes the ATP-dependent amination of UTP to CTP with either L-glutamine or ammonia as the source of nitrogen. Regulates intracellular CTP levels through interactions with the four ribonucleotide triphosphates. The protein is CTP synthase of Methylobacillus flagellatus (strain ATCC 51484 / DSM 6875 / VKM B-1610 / KT).